We begin with the raw amino-acid sequence, 196 residues long: Adenylate kinase (196 aa).

Residue 10 to 15 participates in ATP binding; sequence GAGKGT. Residues 30-59 are NMP; the sequence is STGDMLRAAVSAGTEIGKRAKAVMDAGGLV. AMP is bound by residues threonine 31, arginine 36, 57-59, 85-88, and glutamine 92; these read GLV and GYPR. An LID region spans residues 126–142; that stretch reads NRVAETIAAGGTVRSDD. Arginine 127 lines the ATP pocket. 2 residues coordinate AMP: arginine 139 and arginine 150. An ATP-binding site is contributed by alanine 178.

Belongs to the adenylate kinase family. As to quaternary structure, monomer.

The protein localises to the cytoplasm. It carries out the reaction AMP + ATP = 2 ADP. It functions in the pathway purine metabolism; AMP biosynthesis via salvage pathway; AMP from ADP: step 1/1. Functionally, catalyzes the reversible transfer of the terminal phosphate group between ATP and AMP. Plays an important role in cellular energy homeostasis and in adenine nucleotide metabolism. The sequence is that of Adenylate kinase from Agrobacterium fabrum (strain C58 / ATCC 33970) (Agrobacterium tumefaciens (strain C58)).